A 505-amino-acid polypeptide reads, in one-letter code: Probable cytosol aminopeptidase (505 aa).

Mn(2+)-binding residues include K268 and D273. K280 is an active-site residue. Positions 291, 350, and 352 each coordinate Mn(2+). The active site involves R354.

This sequence belongs to the peptidase M17 family. The cofactor is Mn(2+).

It is found in the cytoplasm. It carries out the reaction Release of an N-terminal amino acid, Xaa-|-Yaa-, in which Xaa is preferably Leu, but may be other amino acids including Pro although not Arg or Lys, and Yaa may be Pro. Amino acid amides and methyl esters are also readily hydrolyzed, but rates on arylamides are exceedingly low.. The catalysed reaction is Release of an N-terminal amino acid, preferentially leucine, but not glutamic or aspartic acids.. In terms of biological role, presumably involved in the processing and regular turnover of intracellular proteins. Catalyzes the removal of unsubstituted N-terminal amino acids from various peptides. This Syntrophobacter fumaroxidans (strain DSM 10017 / MPOB) protein is Probable cytosol aminopeptidase.